The sequence spans 993 residues: ATP-dependent DNA helicase MPH1 (993 aa).

Residues 94-261 (IVHKSLFQNT…EVVNNLDISK (168 aa)) enclose the Helicase ATP-binding domain. 107-114 (IPTGMGKT) is a binding site for ATP. Residues 209-212 (DEAH) carry the DEAH box motif. The 149-residue stretch at 507-655 (KVERLHRQEQ…CIDYKKSDRI (149 aa)) folds into the Helicase C-terminal domain. The disordered stretch occupies residues 530-551 (NDKLERSARRTGSSEEAQISGM). Residues 539-551 (RTGSSEEAQISGM) show a composition bias toward polar residues.

It belongs to the DEAD box helicase family. DEAH subfamily. FANCM sub-subfamily. In terms of assembly, interacts with the MHF histone-fold complex to form the FANCM-MHF complex.

It localises to the nucleus. It catalyses the reaction ATP + H2O = ADP + phosphate + H(+). In terms of biological role, ATP-dependent DNA helicase involved in DNA damage repair by homologous recombination and in genome maintenance. Capable of unwinding D-loops. Plays a role in limiting crossover recombinants during mitotic DNA double-strand break (DSB) repair. Component of a FANCM-MHF complex which promotes gene conversion at blocked replication forks, probably by reversal of the stalled fork. The chain is ATP-dependent DNA helicase MPH1 from Saccharomyces cerevisiae (strain YJM789) (Baker's yeast).